The following is a 334-amino-acid chain: Malate dehydrogenase 2 (334 aa).

Position 12–18 (12–18 (GAAGRVA)) interacts with NAD(+). Residues arginine 93 and arginine 99 each contribute to the substrate site. Residues asparagine 106, glutamine 113, and 130–132 (VGN) contribute to the NAD(+) site. 2 residues coordinate substrate: asparagine 132 and arginine 166. Catalysis depends on histidine 191, which acts as the Proton acceptor.

Belongs to the LDH/MDH superfamily. MDH type 2 family.

It catalyses the reaction (S)-malate + NAD(+) = oxaloacetate + NADH + H(+). Functionally, catalyzes the reversible oxidation of malate to oxaloacetate. The sequence is that of Malate dehydrogenase 2 from Albidiferax ferrireducens (strain ATCC BAA-621 / DSM 15236 / T118) (Rhodoferax ferrireducens).